Reading from the N-terminus, the 127-residue chain is Large ribosomal subunit protein bL19 (127 aa).

It belongs to the bacterial ribosomal protein bL19 family.

This protein is located at the 30S-50S ribosomal subunit interface and may play a role in the structure and function of the aminoacyl-tRNA binding site. The polypeptide is Large ribosomal subunit protein bL19 (Bradyrhizobium sp. (strain BTAi1 / ATCC BAA-1182)).